The chain runs to 297 residues: F-box only protein 2 (297 aa).

The interval 1-42 (MDGDGDPESVGQPEEASPEEQQEEACAEEANGGEERPEDDGE) is disordered. Residues 16 to 27 (ASPEEQQEEACA) show a composition bias toward acidic residues. One can recognise an F-box domain in the interval 45-92 (AAYLDELPEPLLLRVLAELPAAQLVQACRLVCLRWKELVDGAPLWLLK). The 184-residue stretch at 114–297 (FYFLSKRRRN…VTNSSVWVEP (184 aa)) folds into the FBA domain. A carbohydrate-binding positions include 211–213 (RRD) and 279–280 (YW).

Component of the SCF(FBXO2) complex consisting of CUL1, RBX1, SKP1 and FBXO2. Predominantly detected as heterodimer with SKP1; the heterodimer with SKP1 is not part of the SCF(FBXO2) complex.

It is found in the cytoplasm. It localises to the microsome membrane. It participates in protein modification; protein ubiquitination. Its function is as follows. Substrate recognition component of a SCF (SKP1-CUL1-F-box protein) E3 ubiquitin-protein ligase complex that mediates the ubiquitination and subsequent proteasomal degradation of target proteins. Involved in the endoplasmic reticulum-associated degradation pathway (ERAD) for misfolded lumenal proteins by recognizing and binding sugar chains on unfolded glycoproteins that are retrotranslocated into the cytosol and promoting their ubiquitination and subsequent degradation. Prevents formation of cytosolic aggregates of unfolded glycoproteins that have been retrotranslocated into the cytosol. Able to recognize and bind denatured glycoproteins, preferentially those of the high-mannose type. This chain is F-box only protein 2 (FBXO2), found in Bos taurus (Bovine).